We begin with the raw amino-acid sequence, 554 residues long: DnaJ homolog subfamily C member 1 (554 aa).

The N-terminal stretch at 1-47 is a signal peptide; sequence MTAPCSQPAQLPGRRQLGLVPFPPPPPRTPLLWLLLLLLAAVAPARG. Over 48–153 the chain is Lumenal; that stretch reads WESGDLELFD…RRVRKMSNAE (106 aa). Residues 65-129 enclose the J domain; sequence NFYQFLGVQQ…ERRQRYDDIL (65 aa). Residues 154 to 174 form a helical membrane-spanning segment; that stretch reads LALLLFIILTVGHYAVVWSIY. The Cytoplasmic segment spans residues 175 to 554; that stretch reads LEKQLDELLS…LVQKKKQAKS (380 aa). The SANT 1 domain maps to 325 to 379; that stretch reads KQAPEWTEEDLSQLTRSMVKFPGGTPGRWEKIAHELGRSVTDVTTKAKQLKDSVT. S381 is subject to Phosphoserine. Polar residues predominate over residues 392–405; the sequence is STVQNSRPIKTATT. Positions 392-500 are disordered; the sequence is STVQNSRPIK…RSAEEPWTQN (109 aa). The span at 421–432 shows a compositional bias: acidic residues; sequence AAEEEQEGDSGE. S430 bears the Phosphoserine mark. The span at 455–472 shows a compositional bias: basic and acidic residues; sequence AKPEPEEKSRAKRQKDFD. The span at 473–482 shows a compositional bias: acidic residues; it reads IAEQNESSDE. Phosphoserine occurs at positions 479, 480, 484, and 492. Residues 483–494 are compositionally biased toward basic and acidic residues; that stretch reads ESLRKERARSAE. Residues 492-547 enclose the SANT 2 domain; the sequence is SAEEPWTQNQQKLLELALQQYPRGSSDRWDKIARCVPSKSKEDCIARYKLLVELVQ.

As to quaternary structure, interacts (via J domain) with HSPA5. Interacts (via cytosolic domain) with ribosomes. Interacts (via SANT 2 domain) with SERPINA3; the interaction delays the formation of the covalent inhibitory complex SERPINA3-chymotrypsin, but does not alter the catalytic activity of SERPINA3. Interacts (via SANT 2 domain) with ITIH4 (via C-terminus); the interaction protects ITIH4 against in vitro cleavage by kallikrein.

It localises to the endoplasmic reticulum membrane. The protein localises to the nucleus membrane. Its subcellular location is the microsome membrane. Its function is as follows. May modulate protein synthesis. The protein is DnaJ homolog subfamily C member 1 (DNAJC1) of Homo sapiens (Human).